The following is a 169-amino-acid chain: UPF0303 protein BCAN_A1444 (169 aa).

The protein belongs to the UPF0303 family.

The chain is UPF0303 protein BCAN_A1444 from Brucella canis (strain ATCC 23365 / NCTC 10854 / RM-666).